A 332-amino-acid chain; its full sequence is Glycerol-3-phosphate dehydrogenase [NAD(P)+] (332 aa).

NADPH-binding residues include tryptophan 11, arginine 30, and lysine 108. Sn-glycerol 3-phosphate is bound by residues lysine 108, glycine 137, and serine 139. Alanine 141 serves as a coordination point for NADPH. Sn-glycerol 3-phosphate is bound by residues lysine 192, aspartate 245, serine 255, arginine 256, and asparagine 257. The Proton acceptor role is filled by lysine 192. Arginine 256 serves as a coordination point for NADPH. Residues valine 280 and glutamate 282 each coordinate NADPH.

Belongs to the NAD-dependent glycerol-3-phosphate dehydrogenase family.

Its subcellular location is the cytoplasm. The catalysed reaction is sn-glycerol 3-phosphate + NAD(+) = dihydroxyacetone phosphate + NADH + H(+). The enzyme catalyses sn-glycerol 3-phosphate + NADP(+) = dihydroxyacetone phosphate + NADPH + H(+). The protein operates within membrane lipid metabolism; glycerophospholipid metabolism. Its function is as follows. Catalyzes the reduction of the glycolytic intermediate dihydroxyacetone phosphate (DHAP) to sn-glycerol 3-phosphate (G3P), the key precursor for phospholipid synthesis. This is Glycerol-3-phosphate dehydrogenase [NAD(P)+] from Burkholderia multivorans (strain ATCC 17616 / 249).